We begin with the raw amino-acid sequence, 87 residues long: Large ribosomal subunit protein eL31 (87 aa).

This sequence belongs to the eukaryotic ribosomal protein eL31 family.

In Methanoculleus marisnigri (strain ATCC 35101 / DSM 1498 / JR1), this protein is Large ribosomal subunit protein eL31.